The sequence spans 86 residues: Exodeoxyribonuclease 7 small subunit (86 aa).

Belongs to the XseB family. Heterooligomer composed of large and small subunits.

It is found in the cytoplasm. It carries out the reaction Exonucleolytic cleavage in either 5'- to 3'- or 3'- to 5'-direction to yield nucleoside 5'-phosphates.. Its function is as follows. Bidirectionally degrades single-stranded DNA into large acid-insoluble oligonucleotides, which are then degraded further into small acid-soluble oligonucleotides. The chain is Exodeoxyribonuclease 7 small subunit from Agrobacterium fabrum (strain C58 / ATCC 33970) (Agrobacterium tumefaciens (strain C58)).